Consider the following 173-residue polypeptide: Large ribosomal subunit protein uL16 (173 aa).

This sequence belongs to the universal ribosomal protein uL16 family.

This Methanococcus maripaludis (strain DSM 14266 / JCM 13030 / NBRC 101832 / S2 / LL) protein is Large ribosomal subunit protein uL16.